A 140-amino-acid polypeptide reads, in one-letter code: Small ribosomal subunit protein uS19 (140 aa).

The protein belongs to the universal ribosomal protein uS19 family.

Its function is as follows. Protein S19 forms a complex with S13 that binds strongly to the 16S ribosomal RNA. In Natronomonas pharaonis (strain ATCC 35678 / DSM 2160 / CIP 103997 / JCM 8858 / NBRC 14720 / NCIMB 2260 / Gabara) (Halobacterium pharaonis), this protein is Small ribosomal subunit protein uS19.